We begin with the raw amino-acid sequence, 361 residues long: MLQWLAQLHDTFPAFNVFRYITFRTGGAIVTAVLFVFLFGPGIISTLRLKQGKGQPIRADGPQSHLLTKKGTPTMGGLMIFSGLIVATLLWANLSNLYVWVVLFVTTGFGLIGFYDDYLKVTRQSHAGFSGKARLAIEALIAGIAVVLMINAGRAGLSSSVAFPFFKDLLLDLGWFFVVFGAFVIVAAGNAVNLTDGLDGLAIVPVMIAAASFGMISYLSGNVVFADYLQIHYVAGVGELAVICGAIIGAGLGFLWFNAPPAQIFMGDTGSLALGGLLGSIAVATKHEIVLAVIGGLFVLEAVSVIVQVISFRLTGKRVFRMAPIHHHFEQLGWTESQVVIRFWIIAVVLALLGLATLKLR.

Helical transmembrane passes span 27–47 (GAIVTAVLFVFLFGPGIISTL), 72–92 (TPTMGGLMIFSGLIVATLLWA), 94–114 (LSNLYVWVVLFVTTGFGLIGF), 133–153 (ARLAIEALIAGIAVVLMINAG), 169–189 (LLLDLGWFFVVFGAFVIVAAG), 200–220 (GLAIVPVMIAAASFGMISYLS), 237–257 (VGELAVICGAIIGAGLGFLWF), 264–284 (IFMGDTGSLALGGLLGSIAVA), 289–309 (IVLAVIGGLFVLEAVSVIVQV), and 338–358 (QVVIRFWIIAVVLALLGLATL).

The protein belongs to the glycosyltransferase 4 family. MraY subfamily. The cofactor is Mg(2+).

It is found in the cell inner membrane. It catalyses the reaction UDP-N-acetyl-alpha-D-muramoyl-L-alanyl-gamma-D-glutamyl-meso-2,6-diaminopimeloyl-D-alanyl-D-alanine + di-trans,octa-cis-undecaprenyl phosphate = di-trans,octa-cis-undecaprenyl diphospho-N-acetyl-alpha-D-muramoyl-L-alanyl-D-glutamyl-meso-2,6-diaminopimeloyl-D-alanyl-D-alanine + UMP. Its pathway is cell wall biogenesis; peptidoglycan biosynthesis. Its function is as follows. Catalyzes the initial step of the lipid cycle reactions in the biosynthesis of the cell wall peptidoglycan: transfers peptidoglycan precursor phospho-MurNAc-pentapeptide from UDP-MurNAc-pentapeptide onto the lipid carrier undecaprenyl phosphate, yielding undecaprenyl-pyrophosphoryl-MurNAc-pentapeptide, known as lipid I. This is Phospho-N-acetylmuramoyl-pentapeptide-transferase from Azorhizobium caulinodans (strain ATCC 43989 / DSM 5975 / JCM 20966 / LMG 6465 / NBRC 14845 / NCIMB 13405 / ORS 571).